Here is a 1021-residue protein sequence, read N- to C-terminus: Putative 115 kDa protein in type-1 retrotransposable element R1DM (1021 aa).

Residues 479 to 741 (RCIRLGYFPA…RSCRYLGITV (263 aa)) form the Reverse transcriptase domain. The interval 955 to 971 (CACGDPYEDWMHILCAC) is gag-like cysteine motif.

The protein is Putative 115 kDa protein in type-1 retrotransposable element R1DM (R1A1-element\ORF2) of Drosophila melanogaster (Fruit fly).